The following is a 378-amino-acid chain: Transmembrane 6 superfamily member 2 (378 aa).

The next 9 membrane-spanning stretches (helical) occupy residues 34 to 54 (LCVVLTSALVLGLLFMAVYSL), 63 to 83 (PLYAVFVVFSFTSVVDLVIAL), 110 to 130 (IFICYWDGTVHYLLYLTMAGA), 140 to 160 (LGLYWLGSFAMSLLVFLPGNI), 170 to 190 (PTFFLAILYMLVPCWAGMRIF), 219 to 239 (LTLIVYLILAAFFTVFRGLVV), 269 to 289 (MLMYLFYALPFYCLAAYALTF), 291 to 311 (GCSWLPDWALVFAGAIGQAQF), and 332 to 352 (TWATFLLSNLLFALGPHLLAL). EXPERA domains follow at residues 61–186 (YDPL…CWAG) and 217–351 (ADLT…HLLA).

It belongs to the TM6SF family.

It is found in the endoplasmic reticulum membrane. The protein resides in the endoplasmic reticulum-Golgi intermediate compartment membrane. In terms of biological role, regulator of liver fat metabolism influencing triglyceride secretion and hepatic lipid droplet content. May function as sterol isomerase. This chain is Transmembrane 6 superfamily member 2 (Tm6sf2), found in Rattus norvegicus (Rat).